The sequence spans 421 residues: Elsinochrome C biosynthesis regulatory protein elcR (421 aa).

The span at 1-16 shows a compositional bias: polar residues; it reads MATQLPSPTATTSHSG. The disordered stretch occupies residues 1–20; sequence MATQLPSPTATTSHSGNEPR. The zn(2)-C6 fungal-type DNA-binding region spans 27–54; that stretch reads CNNCSAQKIRCGKQRPACARCVNKKLQC.

It localises to the nucleus. Transcription regulator of the gene cluster that mediates the biosynthesis of elsinochrome C, a perelyenequinone phytotoxin structurally similar to cercosporin. The chain is Elsinochrome C biosynthesis regulatory protein elcR from Phaeosphaeria nodorum (strain SN15 / ATCC MYA-4574 / FGSC 10173) (Glume blotch fungus).